Here is a 397-residue protein sequence, read N- to C-terminus: Cercosporin biosynthesis regulatory protein CTB8 (397 aa).

The segment at residues 26 to 53 (CTHCSSQKIRCTKERPACARCVNKGLLC) is a DNA-binding region (zn(2)-C6 fungal-type). Disordered stretches follow at residues 62-92 (GTRR…DSVK) and 173-198 (AEAS…ATTH). The segment covering 74 to 87 (PETTISNAPTSSVP) has biased composition (polar residues). Residues 179 to 197 (PSSSSSPPSQRSDGGRATT) show a composition bias toward low complexity.

Its subcellular location is the nucleus. In terms of biological role, transcription regulator of the gene cluster that mediates the biosynthesis of cercosporin, a light-activated, non-host-selective toxin. The perylenequinone chromophore of cercosporin absorbs light energy to attain an electronically-activated triplet state and produces active oxygen species such as the hydroxyl radical, superoxide, hydrogen peroxide or singlet oxygen upon reaction with oxygen molecules. These reactive oxygen species cause damage to various cellular components including lipids, proteins and nucleic acids. This Cercospora nicotianae (Barn spot disease fungus) protein is Cercosporin biosynthesis regulatory protein CTB8.